The following is an 88-amino-acid chain: Large ribosomal subunit protein bL27 (88 aa).

The disordered stretch occupies residues Met-1–Leu-21.

It belongs to the bacterial ribosomal protein bL27 family.

In Pelotomaculum thermopropionicum (strain DSM 13744 / JCM 10971 / SI), this protein is Large ribosomal subunit protein bL27.